The chain runs to 360 residues: Peptide chain release factor 1 (360 aa).

Residue Gln235 is modified to N5-methylglutamine. The interval 281 to 310 (AERQRQDAAQAESRRLQVGSGDRSQRIRTY) is disordered.

Belongs to the prokaryotic/mitochondrial release factor family. In terms of processing, methylated by PrmC. Methylation increases the termination efficiency of RF1.

It is found in the cytoplasm. Peptide chain release factor 1 directs the termination of translation in response to the peptide chain termination codons UAG and UAA. This Stenotrophomonas maltophilia (strain R551-3) protein is Peptide chain release factor 1.